A 107-amino-acid polypeptide reads, in one-letter code: Large ribosomal subunit protein uL24 (107 aa).

Belongs to the universal ribosomal protein uL24 family. As to quaternary structure, part of the 50S ribosomal subunit.

Functionally, one of two assembly initiator proteins, it binds directly to the 5'-end of the 23S rRNA, where it nucleates assembly of the 50S subunit. Its function is as follows. One of the proteins that surrounds the polypeptide exit tunnel on the outside of the subunit. The sequence is that of Large ribosomal subunit protein uL24 from Nitrosomonas eutropha (strain DSM 101675 / C91 / Nm57).